The chain runs to 167 residues: Ribosome maturation factor RimM (167 aa).

Residues 94–165 (ENEFYYSDII…KIIITPMEGL (72 aa)) form the PRC barrel domain.

Belongs to the RimM family. In terms of assembly, binds ribosomal protein uS19.

The protein resides in the cytoplasm. An accessory protein needed during the final step in the assembly of 30S ribosomal subunit, possibly for assembly of the head region. Essential for efficient processing of 16S rRNA. May be needed both before and after RbfA during the maturation of 16S rRNA. It has affinity for free ribosomal 30S subunits but not for 70S ribosomes. The protein is Ribosome maturation factor RimM of Staphylococcus aureus (strain Mu3 / ATCC 700698).